Here is a 272-residue protein sequence, read N- to C-terminus: NH(3)-dependent NAD(+) synthetase (272 aa).

An ATP-binding site is contributed by Gly-45–Ser-52. Residue Asp-51 coordinates Mg(2+). Arg-138 contributes to the deamido-NAD(+) binding site. Thr-158 is an ATP binding site. Glu-163 is a Mg(2+) binding site. Residues Lys-171 and Asp-178 each contribute to the deamido-NAD(+) site. ATP-binding residues include Lys-187 and Thr-209. A deamido-NAD(+)-binding site is contributed by His-258 to Lys-259.

This sequence belongs to the NAD synthetase family. In terms of assembly, homodimer.

The catalysed reaction is deamido-NAD(+) + NH4(+) + ATP = AMP + diphosphate + NAD(+) + H(+). It functions in the pathway cofactor biosynthesis; NAD(+) biosynthesis; NAD(+) from deamido-NAD(+) (ammonia route): step 1/1. Catalyzes the ATP-dependent amidation of deamido-NAD to form NAD. Uses ammonia as a nitrogen source. The polypeptide is NH(3)-dependent NAD(+) synthetase (Bacillus velezensis (strain DSM 23117 / BGSC 10A6 / LMG 26770 / FZB42) (Bacillus amyloliquefaciens subsp. plantarum)).